Consider the following 126-residue polypeptide: MAVRILGVDLPQNKRGEIALTYIYGIGCGLSSKILTEAGIDRDTRIKDWTDVQVAAVREIISRNFKVEGDLRSEIQLNIKRLMDIGCYRGIRHRIGLPLRGQSTKNNARTRKGKRKTVANKKRVTK.

The tract at residues 99-126 (LRGQSTKNNARTRKGKRKTVANKKRVTK) is disordered. Basic residues predominate over residues 108–126 (ARTRKGKRKTVANKKRVTK).

This sequence belongs to the universal ribosomal protein uS13 family. Part of the 30S ribosomal subunit. Forms a loose heterodimer with protein S19. Forms two bridges to the 50S subunit in the 70S ribosome.

Functionally, located at the top of the head of the 30S subunit, it contacts several helices of the 16S rRNA. In the 70S ribosome it contacts the 23S rRNA (bridge B1a) and protein L5 of the 50S subunit (bridge B1b), connecting the 2 subunits; these bridges are implicated in subunit movement. Contacts the tRNAs in the A and P-sites. In Azobacteroides pseudotrichonymphae genomovar. CFP2, this protein is Small ribosomal subunit protein uS13.